The following is a 212-amino-acid chain: Inner membrane-spanning protein YciB (212 aa).

The next 6 helical transmembrane spans lie at 19 to 39 (FYGALPPEWILAVGVWLPVAL), 47 to 67 (AIYLATAVAMVVMAVQLALGL), 82 to 102 (AVILVLGGATLWLHDPVFILW), 105 to 122 (TLVNWLFALVFMAPPLFG), 147 to 167 (LAWVVFFLVSGLANLFVAYTF), and 177 to 197 (LFGMLGMTFVFVIGQAVYLGL).

This sequence belongs to the YciB family.

It localises to the cell inner membrane. In terms of biological role, plays a role in cell envelope biogenesis, maintenance of cell envelope integrity and membrane homeostasis. This chain is Inner membrane-spanning protein YciB, found in Thioalkalivibrio sulfidiphilus (strain HL-EbGR7).